A 153-amino-acid chain; its full sequence is UPF0735 ACT domain-containing protein FN1487 (153 aa).

The 77-residue stretch at 76–152 folds into the ACT domain; sequence SLHLSLKDRV…GIADIRITGS (77 aa).

It belongs to the UPF0735 family.

This is UPF0735 ACT domain-containing protein FN1487 from Fusobacterium nucleatum subsp. nucleatum (strain ATCC 25586 / DSM 15643 / BCRC 10681 / CIP 101130 / JCM 8532 / KCTC 2640 / LMG 13131 / VPI 4355).